Consider the following 571-residue polypeptide: Urease subunit alpha (571 aa).

One can recognise a Urease domain in the interval 133-571 (GGIDTHIHFV…LPLAQRYFLF (439 aa)). Residues His138, His140, and Lys221 each coordinate Ni(2+). Residue Lys221 is modified to N6-carboxylysine. His223 provides a ligand contact to substrate. Ni(2+)-binding residues include His250 and His276. His324 (proton donor) is an active-site residue. Asp364 contacts Ni(2+).

This sequence belongs to the metallo-dependent hydrolases superfamily. Urease alpha subunit family. In terms of assembly, heterotrimer of UreA (gamma), UreB (beta) and UreC (alpha) subunits. Three heterotrimers associate to form the active enzyme. Ni cation serves as cofactor. Post-translationally, carboxylation allows a single lysine to coordinate two nickel ions.

It is found in the cytoplasm. It carries out the reaction urea + 2 H2O + H(+) = hydrogencarbonate + 2 NH4(+). Its pathway is nitrogen metabolism; urea degradation; CO(2) and NH(3) from urea (urease route): step 1/1. The polypeptide is Urease subunit alpha (Anaeromyxobacter sp. (strain K)).